The chain runs to 397 residues: Penicillopepsin-1 (397 aa).

Residues 1-20 (MVVFSQVTVALTCFSAIASA) form the signal peptide. Positions 21–71 (AAVRQEPPQGFTVNQVQKAVPGTRTVNLPGLYANALVKYGATVPATVHAAA) are cleaved as a propeptide — activation peptide. The Peptidase A1 domain maps to 87-394 (YLTPVTIGSS…DSEGPRLGFA (308 aa)). Catalysis depends on residues Asp103 and Asp285. Asn311 is a glycosylation site (N-linked (GlcNAc...) asparagine). An intrachain disulfide couples Cys322 to Cys357.

This sequence belongs to the peptidase A1 family. As to quaternary structure, monomer.

It localises to the secreted. It catalyses the reaction Hydrolysis of proteins with broad specificity similar to that of pepsin A, preferring hydrophobic residues at P1 and P1', but also cleaving 20-Gly-|-Glu-21 in the B chain of insulin. Clots milk, and activates trypsinogen.. In terms of biological role, secreted aspartic endopeptidase that allows assimilation of proteinaceous substrates. The scissile peptide bond is attacked by a nucleophilic water molecule activated by two aspartic residues in the active site. Shows a broad primary substrate specificity. Favors hydrophobic residues at the P1 and P1' positions, but can also activate trypsinogen and hydrolyze the B chain of insulin between positions 'Gly-20' and 'Glu-21'. The sequence is that of Penicillopepsin-1 from Penicillium roqueforti.